Consider the following 374-residue polypeptide: Tuliposide A-converting enzyme b1, amyloplastic (374 aa).

Residues 1 to 68 (MSVALFCGPP…TNSSLSPSPT (68 aa)) constitute an amyloplast transit peptide. The active-site Acyl-ester intermediate is Ser226. Catalysis depends on charge relay system residues Asp316 and His348.

It belongs to the AB hydrolase superfamily. As to quaternary structure, homodimer. In terms of tissue distribution, highly expressed in pistil and bulb scales. Lower expression in stem, and barely detected in root, leaf, petal and stamen.

Its subcellular location is the plastid. It is found in the amyloplast. It catalyses the reaction 6-tuliposide A = tulipalin A + D-glucose. In terms of biological role, lactone-forming carboxylesterases, specifically catalyzing intramolecular transesterification, but not hydrolysis. Involved in the biosynthesis of tulipalins, defensive chemicals that show antimicrobial activities against a broad range of strains of bacteria and fungi. Substrates are 6-tuliposide A &gt; 6-tuliposide B. The polypeptide is Tuliposide A-converting enzyme b1, amyloplastic (TCEA-B1) (Tulipa gesneriana (Garden tulip)).